Reading from the N-terminus, the 459-residue chain is NADP-specific glutamate dehydrogenase (459 aa).

The active site involves Lys114.

This sequence belongs to the Glu/Leu/Phe/Val dehydrogenases family. As to quaternary structure, homohexamer.

The catalysed reaction is L-glutamate + NADP(+) + H2O = 2-oxoglutarate + NH4(+) + NADPH + H(+). The polypeptide is NADP-specific glutamate dehydrogenase (gdhA) (Emericella nidulans (strain FGSC A4 / ATCC 38163 / CBS 112.46 / NRRL 194 / M139) (Aspergillus nidulans)).